Reading from the N-terminus, the 664-residue chain is Acetylcholinesterase (664 aa).

A signal peptide spans 1 to 29; the sequence is MFVNQRTRRPYMSVFVLVLGAAVICPAYG. The cysteines at positions 95 and 122 are disulfide-linked. Asn117 carries N-linked (GlcNAc...) asparagine glycosylation. The active-site Acyl-ester intermediate is the Ser261. A disulfide bridge connects residues Cys315 and Cys330. The N-linked (GlcNAc...) asparagine glycan is linked to Asn316. Catalysis depends on charge relay system residues Glu390 and His504. An intrachain disulfide couples Cys466 to Cys588. An N-linked (GlcNAc...) asparagine glycan is attached at Asn517. Asn647 carries the GPI-anchor amidated asparagine lipid modification. A propeptide spans 648 to 664 (removed in mature form); sequence KTPPHPQVILETRAFMH.

Belongs to the type-B carboxylesterase/lipase family. In terms of assembly, homodimer; disulfide-linked.

It is found in the synapse. It localises to the cell membrane. It carries out the reaction acetylcholine + H2O = choline + acetate + H(+). In terms of biological role, rapidly hydrolyzes choline released into the synapse. It can hydrolyze butyrylthiocholine. The sequence is that of Acetylcholinesterase from Anopheles stephensi (Indo-Pakistan malaria mosquito).